The chain runs to 172 residues: Translationally-controlled tumor protein homolog (172 aa).

One can recognise a TCTP domain in the interval 1–172 (MIIYKDTVTE…FKDGLISEKC (172 aa)).

Belongs to the TCTP family.

The protein localises to the cytoplasm. In terms of biological role, involved in calcium binding and microtubule stabilization. In Xenopus tropicalis (Western clawed frog), this protein is Translationally-controlled tumor protein homolog (tpt1).